Reading from the N-terminus, the 148-residue chain is Glutamate mutase sigma subunit (148 aa).

In terms of domain architecture, B12-binding spans N3–S140. Residues A13 to A17, H16, S61 to I63, and N93 to G97 contribute to the adenosylcob(III)alamin site.

The protein belongs to the methylaspartate mutase GlmS subunit family. Heterotetramer composed of 2 epsilon subunits (GlmE) and 2 sigma subunits (GlmS). GlmE exists as a homodimer and GlmS as a monomer. It depends on adenosylcob(III)alamin as a cofactor.

It catalyses the reaction (2S,3S)-3-methyl-L-aspartate = L-glutamate. It participates in amino-acid degradation; L-glutamate degradation via mesaconate pathway; acetate and pyruvate from L-glutamate: step 1/4. Functionally, catalyzes the carbon skeleton rearrangement of L-glutamate to L-threo-3-methylaspartate ((2S,3S)-3-methylaspartate). This Yersinia enterocolitica serotype O:8 / biotype 1B (strain NCTC 13174 / 8081) protein is Glutamate mutase sigma subunit.